Consider the following 332-residue polypeptide: 2,3-diketo-L-gulonate reductase (332 aa).

Catalysis depends on His-44, which acts as the Proton donor. NAD(+) contacts are provided by residues Ile-168–Ser-174, Trp-224–Lys-225, and Gly-304–Glu-306.

This sequence belongs to the LDH2/MDH2 oxidoreductase family. DlgD subfamily. As to quaternary structure, homodimer.

The protein localises to the cytoplasm. It catalyses the reaction 3-dehydro-L-gulonate + NAD(+) = 2,3-dioxo-L-gulonate + NADH + H(+). It carries out the reaction 3-dehydro-L-gulonate + NADP(+) = 2,3-dioxo-L-gulonate + NADPH + H(+). In terms of biological role, catalyzes the reduction of 2,3-diketo-L-gulonate in the presence of NADH, to form 3-keto-L-gulonate. The polypeptide is 2,3-diketo-L-gulonate reductase (Escherichia coli (strain SMS-3-5 / SECEC)).